The sequence spans 325 residues: tRNA uridine(34) hydroxylase (325 aa).

Positions glutamate 122–tryptophan 218 constitute a Rhodanese domain. The active-site Cysteine persulfide intermediate is the cysteine 178.

It belongs to the TrhO family.

It catalyses the reaction uridine(34) in tRNA + AH2 + O2 = 5-hydroxyuridine(34) in tRNA + A + H2O. Catalyzes oxygen-dependent 5-hydroxyuridine (ho5U) modification at position 34 in tRNAs. The protein is tRNA uridine(34) hydroxylase of Chlamydia felis (strain Fe/C-56) (Chlamydophila felis).